Reading from the N-terminus, the 570-residue chain is Peptidyl-prolyl cis-trans isomerase FKBP9 (570 aa).

Residues 1-24 (MAFRGWRPPPPPLLLLLLWVTGQA) form the signal peptide. PPIase FKBP-type domains are found at residues 54–142 (GDFV…MDIW), 166–254 (SDFV…LDLH), 278–365 (GDFL…IDFH), and 389–477 (GDYL…LELV). N-linked (GlcNAc...) asparagine glycans are attached at residues N174, N286, N302, and N397. EF-hand domains are found at residues 488–523 (WNGE…QVAS) and 533–568 (DAEL…AKHD). 10 residues coordinate Ca(2+): D501, D503, N505, E507, E512, D546, N548, D550, K552, and E557. The short motif at 567-570 (HDEL) is the Prevents secretion from ER element.

Post-translationally, phosphorylated.

It is found in the endoplasmic reticulum. It catalyses the reaction [protein]-peptidylproline (omega=180) = [protein]-peptidylproline (omega=0). Its activity is regulated as follows. Inhibited by FK506. Functionally, PPIases accelerate the folding of proteins during protein synthesis. The protein is Peptidyl-prolyl cis-trans isomerase FKBP9 (FKBP9) of Homo sapiens (Human).